The sequence spans 1441 residues: ABC transporter G family member 41 (1441 aa).

The segment covering 1–14 has biased composition (basic and acidic residues); the sequence is MEDKKQQQQQQREE. The disordered stretch occupies residues 1–28; the sequence is MEDKKQQQQQQREEAEAEEEAPVVPSSL. Positions 159 to 432 constitute an ABC transporter 1 domain; the sequence is ATARGLSRRP…FESCGFKCPE (274 aa). 192–199 provides a ligand contact to ATP; that stretch reads GPPGCGKT. Positions 510-722 constitute an ABC transmembrane type-2 1 domain; sequence DLLKACFARE…AEIGLTGNEF (213 aa). The next 6 helical transmembrane spans lie at 528–548, 566–586, 600–620, 642–662, 672–692, and 758–778; these read FIYITKVVQLGLLAVITGTVF, SLFYALILLLVNGFPELAIAV, FYPAWAYAIPSFILKIPLSLV, FFCQLLILFLVHTGALSLFRC, ASSVGGTMSFLVILLFGGFII, and ASALIGFILLLNVGYAIGLTI. The region spanning 838–1090 is the ABC transporter 2 domain; sequence ISFQDVNYYV…NVIHYFETIP (253 aa). 883–890 contributes to the ATP binding site; it reads GVTGAGKT. The ABC transmembrane type-2 2 domain maps to 1163 to 1379; it reads EQLKACIWKQ…TLNVFFTTQF (217 aa). 7 helical membrane-spanning segments follow: residues 1187–1207, 1215–1235, 1272–1292, 1300–1320, 1329–1349, 1357–1377, and 1413–1433; these read ILFITISCIVFGVLFWQQGDI, GLFTILGCMYGTTLFTGINNC, IPYVLVQILLIMFIAYPMIGY, FWFMYTIACTLLYFLYFGMMI, VASILASMFYTLQNLMSGFIV, WWIWLYYTSPLSWTLNVFFTT, and LAAIILAMFPILFAILFGLSI.

Belongs to the ABC transporter superfamily. ABCG family. PDR (TC 3.A.1.205) subfamily.

The protein localises to the membrane. Its function is as follows. May be a general defense protein. This is ABC transporter G family member 41 from Oryza sativa subsp. japonica (Rice).